The following is a 311-amino-acid chain: tRNA dimethylallyltransferase (311 aa).

13–20 (GPTASGKT) serves as a coordination point for ATP. Residue 15–20 (TASGKT) coordinates substrate. 2 interaction with substrate tRNA regions span residues 38–41 (DSMQ) and 166–170 (QRVLR).

Belongs to the IPP transferase family. Monomer. Mg(2+) serves as cofactor.

The enzyme catalyses adenosine(37) in tRNA + dimethylallyl diphosphate = N(6)-dimethylallyladenosine(37) in tRNA + diphosphate. In terms of biological role, catalyzes the transfer of a dimethylallyl group onto the adenine at position 37 in tRNAs that read codons beginning with uridine, leading to the formation of N6-(dimethylallyl)adenosine (i(6)A). The protein is tRNA dimethylallyltransferase of Staphylococcus aureus (strain bovine RF122 / ET3-1).